The sequence spans 371 residues: 4-hydroxy-3-methylbut-2-en-1-yl diphosphate synthase (flavodoxin) (371 aa).

Positions 272, 275, 307, and 314 each coordinate [4Fe-4S] cluster.

Belongs to the IspG family. It depends on [4Fe-4S] cluster as a cofactor.

It carries out the reaction (2E)-4-hydroxy-3-methylbut-2-enyl diphosphate + oxidized [flavodoxin] + H2O + 2 H(+) = 2-C-methyl-D-erythritol 2,4-cyclic diphosphate + reduced [flavodoxin]. It participates in isoprenoid biosynthesis; isopentenyl diphosphate biosynthesis via DXP pathway; isopentenyl diphosphate from 1-deoxy-D-xylulose 5-phosphate: step 5/6. Functionally, converts 2C-methyl-D-erythritol 2,4-cyclodiphosphate (ME-2,4cPP) into 1-hydroxy-2-methyl-2-(E)-butenyl 4-diphosphate. The protein is 4-hydroxy-3-methylbut-2-en-1-yl diphosphate synthase (flavodoxin) of Pseudomonas aeruginosa (strain LESB58).